The sequence spans 1070 residues: MLQNGNEGMSTIPGFSQIQFEGFCRFINQGLTEEFHKFQKIEDRDQEIEFQLFVETYQLVEPLITERDAVYESLTYSSELYVPAVLIWKTGRNMQEQTVFIGNIPIMNSFGTSIVNGIYRIVINQIVQSPGIYYRSELEHNGVSVYTSTIISDWGGRSELEIDRKARIWARVSRKQKISILVLSSAMGSNIREILDNVCYPEIFLSFPNDKEKKKIGSKENAILEFYQQFACVGGDPVFSESLCKELQKKFFQQRCELGKIGRQNLNRRLNLDIPQNNTFLLPRDLLAAVDHLIGMKLGMGTLDDMSHLKNKRIRSVADLLQDQFGLALVRLENTVRGTICGAIRHKLIPTPQNLVTSTSLTTTYESFFGLHPLSQVLDRTNPLTQIVHGRKWSYLGPGGLTGRTASFRIRDIHPSHYGRICPIDTSEGINVGLMGSLAIHVKVGYWGSIESPFYGLSERSKEAQMVYLSPNRDEYYMVAAGNSLALNRDIQEQQVVPARYRQEFLTIAWEEIHLRSIFPFQYFSIGASLIPFIEHNDANRALMSSNMQRQAVPLSRSEKCIVGTGLEGQTALDSGVSVIAECKGKIIYTDTQKIFLSSNGDTLSIPLVMYQRSNKNTCMNQKTQVQRGKYIKKGQILAGGAATAGGELALGKNVLVAYMPWEGYNFEDAVLISERLVYKDIYTSFHIRKYEIQTHVTSQGPERITKEIPHLEARLLRNLDRNGIVMLGSWIETGDILVGKLTPQTASESSYAPEDRLLRAILGIQVSTSKETSLRLPIGGRGRVIDVRWIHRRGVSNSNPERIRVYISQKREIKVGDKVAGRHGNKGIISKILSRQDMPYLQDGTPVDMVFNPLGVPSRMNVGQIFECSLGLAGDLLKKHYRIGPFDERYEQEASRKLVFSELYEASKKTKNPWVFEPEYPGKSRIFDGRTGDLFEQPVLIGKSYILKLIHQVDDKIHGRSSGHYALVTQQPLRGRAKQGGQRVGEMEVWALEGFGVAHILQEMLTYKSDHIRARQEVLGAMIIGATVPNPESAPESFRLLVRELRSLSLELNHFLVSEKNFQMDRKEA.

This sequence belongs to the RNA polymerase beta chain family. As to quaternary structure, in plastids the minimal PEP RNA polymerase catalytic core is composed of four subunits: alpha, beta, beta', and beta''. When a (nuclear-encoded) sigma factor is associated with the core the holoenzyme is formed, which can initiate transcription.

It localises to the plastid. The protein localises to the chloroplast. It catalyses the reaction RNA(n) + a ribonucleoside 5'-triphosphate = RNA(n+1) + diphosphate. In terms of biological role, DNA-dependent RNA polymerase catalyzes the transcription of DNA into RNA using the four ribonucleoside triphosphates as substrates. In Phalaenopsis aphrodite subsp. formosana (Moth orchid), this protein is DNA-directed RNA polymerase subunit beta.